A 95-amino-acid polypeptide reads, in one-letter code: Small ribosomal subunit protein uS19 (95 aa).

This sequence belongs to the universal ribosomal protein uS19 family.

Its function is as follows. Protein S19 forms a complex with S13 that binds strongly to the 16S ribosomal RNA. The sequence is that of Small ribosomal subunit protein uS19 from Syntrophobacter fumaroxidans (strain DSM 10017 / MPOB).